A 494-amino-acid chain; its full sequence is Folate-biopterin transporter (494 aa).

A run of 12 helical transmembrane segments spans residues 31-51, 64-84, 104-124, 133-153, 170-190, 197-217, 246-266, 284-303, 310-330, 346-366, 375-395, and 415-435; these read APSWELLAILSIYFVQGVLGL, LGLSPAAMGALIGLGAAPWIL, SYLWLSGLMGSAGWLLFAAWV, VLLFTSLSVAIGDVIVDSLVV, LTWGAAAVGGIITAYASGALL, TVFAITAIFPLLTVGAAFLIS, ILLPTLFIFFWQATPSAESAF, VRLVTSVAGLIGVGLYQRFL, VIMGWSTVISSLLGLTTLILI, LGDSIILTVTGQIAFMPVLVL, IEATLFALLMSVMNLAGVLSF, and LALLVIITNLSTLLPLPFLGL. The disordered stretch occupies residues 441 to 461; sequence PQVKDKTEKEDNPDDPGDRLV.

The protein belongs to the major facilitator superfamily. Folate-biopterin transporter (TC 2.A.71) family.

It localises to the cell membrane. Functionally, mediates folate monoglutamate transport involved in tetrahydrofolate biosynthesis. It also mediates transport of antifolates, such as methotrexate and aminopterin. The chain is Folate-biopterin transporter from Synechocystis sp. (strain ATCC 27184 / PCC 6803 / Kazusa).